Reading from the N-terminus, the 513-residue chain is Microcin J25-processing protein McjC (513 aa).

The 261-residue stretch at 176 to 436 folds into the Asparagine synthetase domain; it reads STIDSIIDNI…FGSDIFWKKT (261 aa).

It is found in the cytoplasm. Along with McjB, necessary and sufficient to process the inactive microcin J25 (McjA) precursor into the active peptide. May be involved in the formation of the amide bond between Gly-38 and Glu-53 of McjA. The polypeptide is Microcin J25-processing protein McjC (mcjC) (Escherichia coli).